A 539-amino-acid polypeptide reads, in one-letter code: Probable methionine--tRNA ligase, mitochondrial (539 aa).

The 'HIGH' region signature appears at 28 to 38; it reads FYVNAAPHLGH. Positions 326 to 330 match the 'KMSKS' region motif; that stretch reads KMSKS. Position 329 (Lys-329) interacts with ATP.

Belongs to the class-I aminoacyl-tRNA synthetase family.

Its subcellular location is the mitochondrion matrix. The catalysed reaction is tRNA(Met) + L-methionine + ATP = L-methionyl-tRNA(Met) + AMP + diphosphate. This is Probable methionine--tRNA ligase, mitochondrial from Schizosaccharomyces pombe (strain 972 / ATCC 24843) (Fission yeast).